The primary structure comprises 278 residues: Sulfur carrier protein FdhD (278 aa).

Residue Cys-121 is the Cysteine persulfide intermediate of the active site. Position 260 to 265 (260 to 265) interacts with Mo-bis(molybdopterin guanine dinucleotide); it reads FCKPGR.

Belongs to the FdhD family.

The protein resides in the cytoplasm. In terms of biological role, required for formate dehydrogenase (FDH) activity. Acts as a sulfur carrier protein that transfers sulfur from IscS to the molybdenum cofactor prior to its insertion into FDH. This Salmonella newport (strain SL254) protein is Sulfur carrier protein FdhD.